A 314-amino-acid chain; its full sequence is Short-chain dehydrogenase/reductase drtF (314 aa).

NADP(+) contacts are provided by Val26, Lys50, Asp73, Asn100, Tyr185, and Lys189. Tyr185 functions as the Proton acceptor in the catalytic mechanism. Lys189 functions as the Lowers pKa of active site Tyr in the catalytic mechanism.

It belongs to the short-chain dehydrogenases/reductases (SDR) family.

The protein operates within secondary metabolite biosynthesis; terpenoid biosynthesis. In terms of biological role, short-chain dehydrogenase/reductase; part of the gene cluster that mediates the biosynthesis of various drimane-type sesquiterpene esters, compounds that exhibit diverse biological activities and are widely present in eukaryotes. The pathway begins with the synthesis of the backbone drimenol by the terpene cyclase drtB using farnesyl pyrophosphate (FPP) as substrate. The cytochrome P450 monooxygenase drtD is then responsible for the hydroxylations at C-6, C-9 and C-12, as well as the oxidation of hydroxyl groups at C-6 and C-11 to a ketone and an aldehyde, respectively. Then, the biosynthesis can go in two directions, either the hydroxylated drimenol is further hydroxylated at C-2 and C-3 by an enzyme(s) not associated with the drt cluster, or the FAD-binding oxidoreductase drtC further oxidizes C-11 or C-12 to form the butyrolactone ring. DrtB, drtD and drtC are solely responsible for the formation of the different drimane structures observed during drimane sesquiterpenes biosynthesis. The polyketide synthase drtA synthesizes different lengths (C6 and C8) of PKS chains, which are then oxidized to varying degrees by the short-chain dehydrogenase drtF. Finally, these PKS chains are transferred onto drimane sesquiterpenes by the acyltransferase drtE, forming the sesquiterpene esters. In addition to the different fatty acyl-CoA chains produced by drtA, drtE is also able to use cinnamoyl-CoA as a substrate. This is Short-chain dehydrogenase/reductase drtF from Aspergillus calidoustus.